A 313-amino-acid polypeptide reads, in one-letter code: ADP-L-glycero-D-manno-heptose-6-epimerase (313 aa).

NADP(+) is bound by residues 10-11 (FI), 31-32 (DD), Arg-38, Lys-53, 75-79 (EGACS), and Asn-92. Tyr-139 serves as the catalytic Proton acceptor. Lys-143 contacts NADP(+). Asn-168 is a binding site for substrate. The NADP(+) site is built by Val-169 and Lys-177. Lys-177 (proton acceptor) is an active-site residue. Residues Lys-179, His-186, 200–203 (FEGW), Arg-213, and Tyr-277 contribute to the substrate site.

It belongs to the NAD(P)-dependent epimerase/dehydratase family. HldD subfamily. As to quaternary structure, homopentamer. NADP(+) serves as cofactor.

The catalysed reaction is ADP-D-glycero-beta-D-manno-heptose = ADP-L-glycero-beta-D-manno-heptose. Its pathway is nucleotide-sugar biosynthesis; ADP-L-glycero-beta-D-manno-heptose biosynthesis; ADP-L-glycero-beta-D-manno-heptose from D-glycero-beta-D-manno-heptose 7-phosphate: step 4/4. Catalyzes the interconversion between ADP-D-glycero-beta-D-manno-heptose and ADP-L-glycero-beta-D-manno-heptose via an epimerization at carbon 6 of the heptose. The chain is ADP-L-glycero-D-manno-heptose-6-epimerase from Marinobacter nauticus (strain ATCC 700491 / DSM 11845 / VT8) (Marinobacter aquaeolei).